A 308-amino-acid polypeptide reads, in one-letter code: Bifunctional protein FolD (308 aa).

NADP(+)-binding positions include 175 to 177 (GRS), S200, and I241.

This sequence belongs to the tetrahydrofolate dehydrogenase/cyclohydrolase family. Homodimer.

The catalysed reaction is (6R)-5,10-methylene-5,6,7,8-tetrahydrofolate + NADP(+) = (6R)-5,10-methenyltetrahydrofolate + NADPH. The enzyme catalyses (6R)-5,10-methenyltetrahydrofolate + H2O = (6R)-10-formyltetrahydrofolate + H(+). Its pathway is one-carbon metabolism; tetrahydrofolate interconversion. In terms of biological role, catalyzes the oxidation of 5,10-methylenetetrahydrofolate to 5,10-methenyltetrahydrofolate and then the hydrolysis of 5,10-methenyltetrahydrofolate to 10-formyltetrahydrofolate. This chain is Bifunctional protein FolD, found in Jannaschia sp. (strain CCS1).